Here is a 393-residue protein sequence, read N- to C-terminus: NAD(P)H-quinone oxidoreductase subunit H, chloroplastic (393 aa).

This sequence belongs to the complex I 49 kDa subunit family. NDH is composed of at least 16 different subunits, 5 of which are encoded in the nucleus.

Its subcellular location is the plastid. It localises to the chloroplast thylakoid membrane. It carries out the reaction a plastoquinone + NADH + (n+1) H(+)(in) = a plastoquinol + NAD(+) + n H(+)(out). The enzyme catalyses a plastoquinone + NADPH + (n+1) H(+)(in) = a plastoquinol + NADP(+) + n H(+)(out). In terms of biological role, NDH shuttles electrons from NAD(P)H:plastoquinone, via FMN and iron-sulfur (Fe-S) centers, to quinones in the photosynthetic chain and possibly in a chloroplast respiratory chain. The immediate electron acceptor for the enzyme in this species is believed to be plastoquinone. Couples the redox reaction to proton translocation, and thus conserves the redox energy in a proton gradient. The protein is NAD(P)H-quinone oxidoreductase subunit H, chloroplastic of Nuphar advena (Common spatterdock).